The chain runs to 208 residues: Thymidylate kinase (208 aa).

Residue 11–18 (GGEGAGKS) participates in ATP binding.

It belongs to the thymidylate kinase family.

It catalyses the reaction dTMP + ATP = dTDP + ADP. Phosphorylation of dTMP to form dTDP in both de novo and salvage pathways of dTTP synthesis. The chain is Thymidylate kinase (tmk) from Caulobacter vibrioides (strain ATCC 19089 / CIP 103742 / CB 15) (Caulobacter crescentus).